The sequence spans 543 residues: Rop guanine nucleotide exchange factor 11 (543 aa).

The tract at residues Q61–V89 is disordered. The PRONE domain occupies M95–A456.

As to quaternary structure, interacts with ARAC4/ROP2, ARAC3/ROP, ARAC9/ROP8, PHYA and PHYB. As to expression, highly expressed in elongating regions of roots and pollen grains. Expressed in flowers, and at lower levels in leaves and stems.

The protein localises to the cytoplasm. Its function is as follows. Guanine-nucleotide exchange factor (GEF) that acts as an activator of Rop (Rho of plants) GTPases by promoting the exchange of GDP for GTP. Functions as a light-signaling switch that functions in root growth and development through the activation of Rop in a phytochrome-dependent manner. May act as a negative regulator of phytochrome-mediated primary root development. This Arabidopsis thaliana (Mouse-ear cress) protein is Rop guanine nucleotide exchange factor 11 (ROPGEF11).